A 643-amino-acid chain; its full sequence is Threonine--tRNA ligase (643 aa).

Positions 1 to 61 (MPIITLPDGS…EQDATLEIIT (61 aa)) constitute a TGS domain. Positions 243–534 (DHRKIGKALD…ITEEYAGFFP (292 aa)) are catalytic. Cysteine 334, histidine 385, and histidine 511 together coordinate Zn(2+).

It belongs to the class-II aminoacyl-tRNA synthetase family. As to quaternary structure, homodimer. Requires Zn(2+) as cofactor.

It localises to the cytoplasm. It catalyses the reaction tRNA(Thr) + L-threonine + ATP = L-threonyl-tRNA(Thr) + AMP + diphosphate + H(+). In terms of biological role, catalyzes the attachment of threonine to tRNA(Thr) in a two-step reaction: L-threonine is first activated by ATP to form Thr-AMP and then transferred to the acceptor end of tRNA(Thr). Also edits incorrectly charged L-seryl-tRNA(Thr). This is Threonine--tRNA ligase from Haemophilus influenzae (strain PittEE).